Reading from the N-terminus, the 231-residue chain is Aldehyde decarbonylase (231 aa).

The Fe cation site is built by glutamate 32, glutamate 60, histidine 63, glutamate 115, and histidine 147.

It belongs to the aldehyde decarbonylase family. Binds 2 metal cations per subunit. The catalytic dinuclear metal-binding site could be either a di-iron or a manganese-iron cofactor. is required as a cofactor.

It carries out the reaction a long-chain fatty aldehyde + 2 NADPH + O2 + H(+) = a long-chain alkane + formate + 2 NADP(+) + H2O. In terms of biological role, catalyzes the decarbonylation of fatty aldehydes to alkanes. Requires the presence of ferredoxin, ferredoxin reductase and NADPH for in vitro decarbonylase activity. Involved in the biosynthesis of alkanes, mainly heptadecane and pentadecane. This Synechocystis sp. (strain ATCC 27184 / PCC 6803 / Kazusa) protein is Aldehyde decarbonylase.